The sequence spans 371 residues: Serine/threonine-protein kinase 17B (371 aa).

The region spanning Thr-33–Leu-293 is the Protein kinase domain. ATP-binding positions include Leu-39–Val-47 and Lys-62. Catalysis depends on Asp-158, which acts as the Proton acceptor. Residues Ser-308–Asp-345 are disordered. The segment covering Glu-309 to Arg-319 has biased composition (polar residues).

This sequence belongs to the protein kinase superfamily. CAMK Ser/Thr protein kinase family. DAP kinase subfamily. Interacts with CHP1; the interaction induces CHP1 to translocate from the Golgi to the nucleus. Post-translationally, autophosphorylated. As to expression, highly expressed in thymus, spleen, and testis, lower levels present in the brain.

The protein resides in the nucleus. It is found in the cell membrane. It localises to the endoplasmic reticulum-Golgi intermediate compartment. It catalyses the reaction L-seryl-[protein] + ATP = O-phospho-L-seryl-[protein] + ADP + H(+). The enzyme catalyses L-threonyl-[protein] + ATP = O-phospho-L-threonyl-[protein] + ADP + H(+). In terms of biological role, acts as a positive regulator of apoptosis. Phosphorylates myosin light chains. This is Serine/threonine-protein kinase 17B (Stk17b) from Rattus norvegicus (Rat).